The following is a 178-amino-acid chain: Ribosome maturation factor RimM (178 aa).

The 79-residue stretch at 100–178 (TDGEYYWYQL…EMKVEWDADF (79 aa)) folds into the PRC barrel domain.

Belongs to the RimM family. As to quaternary structure, binds ribosomal protein uS19.

The protein resides in the cytoplasm. An accessory protein needed during the final step in the assembly of 30S ribosomal subunit, possibly for assembly of the head region. Essential for efficient processing of 16S rRNA. May be needed both before and after RbfA during the maturation of 16S rRNA. It has affinity for free ribosomal 30S subunits but not for 70S ribosomes. The protein is Ribosome maturation factor RimM of Pseudomonas fluorescens (strain SBW25).